The chain runs to 603 residues: UvrABC system protein C (603 aa).

The GIY-YIG domain maps to 15–92 (DQPGCYLMKN…IQKHQPYYNI (78 aa)). The UVR domain maps to 197-232 (AQVKKQLTARMERAAGQLEFERAAEIRDQLHYIEVT).

This sequence belongs to the UvrC family. In terms of assembly, interacts with UvrB in an incision complex.

It localises to the cytoplasm. The UvrABC repair system catalyzes the recognition and processing of DNA lesions. UvrC both incises the 5' and 3' sides of the lesion. The N-terminal half is responsible for the 3' incision and the C-terminal half is responsible for the 5' incision. The polypeptide is UvrABC system protein C (Limosilactobacillus fermentum (strain NBRC 3956 / LMG 18251) (Lactobacillus fermentum)).